The primary structure comprises 415 residues: Tyrosine--tRNA ligase (415 aa).

Tyrosine 33 is a binding site for L-tyrosine. The 'HIGH' region signature appears at 38–47 (PSGESLHLGN). Tyrosine 161 and glutamine 165 together coordinate L-tyrosine. A 'KMSKS' region motif is present at residues 225–229 (KFGKS). Lysine 228 lines the ATP pocket. Positions 350–414 (MVIDFLLQAK…KKNYFIVVWK (65 aa)) constitute an S4 RNA-binding domain.

This sequence belongs to the class-I aminoacyl-tRNA synthetase family. TyrS type 1 subfamily. As to quaternary structure, homodimer.

Its subcellular location is the cytoplasm. The enzyme catalyses tRNA(Tyr) + L-tyrosine + ATP = L-tyrosyl-tRNA(Tyr) + AMP + diphosphate + H(+). Functionally, catalyzes the attachment of tyrosine to tRNA(Tyr) in a two-step reaction: tyrosine is first activated by ATP to form Tyr-AMP and then transferred to the acceptor end of tRNA(Tyr). This chain is Tyrosine--tRNA ligase, found in Mycoplasmoides gallisepticum (strain R(low / passage 15 / clone 2)) (Mycoplasma gallisepticum).